A 366-amino-acid chain; its full sequence is D-alanine--D-alanine ligase (366 aa).

The ATP-grasp domain occupies 146–352 (KICFEHAGLQ…YTELINRLIE (207 aa)). Position 179–234 (179–234 (EKKLRYPMFVKPANMGSSVGISKAHNRNELIEAIELALAYDRKFLIEKAINAREME)) interacts with ATP. Aspartate 305, glutamate 319, and asparagine 321 together coordinate Mg(2+).

The protein belongs to the D-alanine--D-alanine ligase family. The cofactor is Mg(2+). It depends on Mn(2+) as a cofactor.

Its subcellular location is the cytoplasm. It catalyses the reaction 2 D-alanine + ATP = D-alanyl-D-alanine + ADP + phosphate + H(+). Its pathway is cell wall biogenesis; peptidoglycan biosynthesis. Functionally, cell wall formation. In Chloroherpeton thalassium (strain ATCC 35110 / GB-78), this protein is D-alanine--D-alanine ligase.